The following is a 108-amino-acid chain: Glutaredoxin-1 (108 aa).

Positions 3–106 (EEFVQQRLAN…DILLSIGVLR (104 aa)) constitute a Glutaredoxin domain. The cysteines at positions 23 and 26 are disulfide-linked.

This sequence belongs to the glutaredoxin family.

Its subcellular location is the virion. Functionally, displays thioltransferase and dehydroascorbate reductase activities. This Cynomys gunnisoni (Gunnison's prairie dog) protein is Glutaredoxin-1 (OPG075).